The chain runs to 286 residues: Pantothenate synthetase (286 aa).

Met-30–His-37 provides a ligand contact to ATP. The Proton donor role is filled by His-37. Gln-61 provides a ligand contact to (R)-pantoate. Residue Gln-61 coordinates beta-alanine. Gly-147–Asp-150 serves as a coordination point for ATP. Residue Gln-153 participates in (R)-pantoate binding. ATP contacts are provided by residues Leu-176 and His-184–Arg-187.

This sequence belongs to the pantothenate synthetase family. In terms of assembly, homodimer.

The protein localises to the cytoplasm. It catalyses the reaction (R)-pantoate + beta-alanine + ATP = (R)-pantothenate + AMP + diphosphate + H(+). It participates in cofactor biosynthesis; (R)-pantothenate biosynthesis; (R)-pantothenate from (R)-pantoate and beta-alanine: step 1/1. Its function is as follows. Catalyzes the condensation of pantoate with beta-alanine in an ATP-dependent reaction via a pantoyl-adenylate intermediate. The chain is Pantothenate synthetase from Bartonella tribocorum (strain CIP 105476 / IBS 506).